A 137-amino-acid polypeptide reads, in one-letter code: Putative nickel-responsive regulator (137 aa).

Ni(2+) contacts are provided by His78, His89, His91, and Cys97.

This sequence belongs to the transcriptional regulatory CopG/NikR family. The cofactor is Ni(2+).

Functionally, transcriptional regulator. The polypeptide is Putative nickel-responsive regulator (Syntrophus aciditrophicus (strain SB)).